A 447-amino-acid polypeptide reads, in one-letter code: Beclin-1 (447 aa).

Positions 105–124 (TMENLSRRLKVTSNLFDIMS) match the BH3 motif. Residues 109–156 (LSRRLKVTSNLFDIMSGQTDIDHPLCEECTDTLLDHLDTQLNITENEC) form an interaction with BCL2 and BCL2L1 isoform Bcl-X(L) region. Positions 140–214 (TLLDHLDTQL…VAKELDEGRN (75 aa)) form a coiled coil. The interval 242–447 (DDLKSVDNQM…AWVSSQFYNR (206 aa)) is evolutionary conserved domain (ECD). K399 participates in a covalent cross-link: Glycyl lysine isopeptide (Lys-Gly) (interchain with G-Cter in ubiquitin). Residues 422–447 (WTKALKFMLTNLKWGLAWVSSQFYNR) form a required for membrane-association region.

This sequence belongs to the beclin family. As to quaternary structure, component of the PI3K (PI3KC3/PI3K-III/class III phosphatidylinositol 3-kinase) complex. Interacts with the poly-Gln domain of ATXN3; the interaction causes deubiquitination at Lys-399 and stabilizes BECN1. In terms of processing, polyubiquitinated at Lys-399 with 'Lys-48'-linkages. 'Lys-48'-linked polyubiquitination of Lys-399 leads to degradation. Deubiquitinated by ATXN3, leading to stabilization.

It is found in the cytoplasm. It localises to the golgi apparatus. The protein resides in the trans-Golgi network membrane. Its subcellular location is the endosome membrane. The protein localises to the endoplasmic reticulum membrane. It is found in the mitochondrion membrane. It localises to the endosome. The protein resides in the cytoplasmic vesicle. Its subcellular location is the autophagosome. In terms of biological role, plays a central role in autophagy. Acts as a core subunit of different PI3K complex forms that mediate formation of phosphatidylinositol 3-phosphate and are believed to play a role in multiple membrane trafficking pathways: PI3KC3-C1 is involved in initiation of autophagosomes and PI3KC3-C2 in maturation of autophagosomes and endocytosis. Involved in regulation of degradative endocytic trafficking and required for the abscission step in cytokinesis, probably in the context of PI3KC3-C2. Essential for the formation of PI3KC3-C2 but not PI3KC3-C1 PI3K complex forms. Involved in endocytosis including endosome formation in neuronal cells. The chain is Beclin-1 (becn1) from Danio rerio (Zebrafish).